A 224-amino-acid chain; its full sequence is Pyridoxal 5'-phosphate synthase subunit SNO1 (224 aa).

67–69 (GES) is a binding site for L-glutamine. Cysteine 100 serves as the catalytic Nucleophile. Residues arginine 129 and 160-161 (IR) contribute to the L-glutamine site. Active-site charge relay system residues include histidine 203 and glutamate 205.

It belongs to the glutaminase PdxT/SNO family.

It carries out the reaction aldehydo-D-ribose 5-phosphate + D-glyceraldehyde 3-phosphate + L-glutamine = pyridoxal 5'-phosphate + L-glutamate + phosphate + 3 H2O + H(+). The enzyme catalyses L-glutamine + H2O = L-glutamate + NH4(+). It participates in cofactor biosynthesis; pyridoxal 5'-phosphate biosynthesis. In terms of biological role, catalyzes the hydrolysis of glutamine to glutamate and ammonia as part of the biosynthesis of pyridoxal 5'-phosphate. The resulting ammonia molecule is channeled to the active site of a SNZ isoform. This Saccharomyces cerevisiae (strain ATCC 204508 / S288c) (Baker's yeast) protein is Pyridoxal 5'-phosphate synthase subunit SNO1 (SNO1).